Consider the following 244-residue polypeptide: 3-deoxy-manno-octulosonate cytidylyltransferase (244 aa).

Belongs to the KdsB family.

It localises to the cytoplasm. The catalysed reaction is 3-deoxy-alpha-D-manno-oct-2-ulosonate + CTP = CMP-3-deoxy-beta-D-manno-octulosonate + diphosphate. The protein operates within nucleotide-sugar biosynthesis; CMP-3-deoxy-D-manno-octulosonate biosynthesis; CMP-3-deoxy-D-manno-octulosonate from 3-deoxy-D-manno-octulosonate and CTP: step 1/1. It participates in bacterial outer membrane biogenesis; lipopolysaccharide biosynthesis. Activates KDO (a required 8-carbon sugar) for incorporation into bacterial lipopolysaccharide in Gram-negative bacteria. In Flavobacterium johnsoniae (strain ATCC 17061 / DSM 2064 / JCM 8514 / BCRC 14874 / CCUG 350202 / NBRC 14942 / NCIMB 11054 / UW101) (Cytophaga johnsonae), this protein is 3-deoxy-manno-octulosonate cytidylyltransferase.